Reading from the N-terminus, the 1054-residue chain is Isoleucine--tRNA ligase (1054 aa).

Residues 58–68 (PFANGLPHYGH) carry the 'HIGH' region motif. Positions 627–631 (KMSKS) match the 'KMSKS' region motif. Lys-630 provides a ligand contact to ATP.

It belongs to the class-I aminoacyl-tRNA synthetase family. IleS type 2 subfamily. In terms of assembly, monomer. It depends on Zn(2+) as a cofactor.

It localises to the cytoplasm. The enzyme catalyses tRNA(Ile) + L-isoleucine + ATP = L-isoleucyl-tRNA(Ile) + AMP + diphosphate. In terms of biological role, catalyzes the attachment of isoleucine to tRNA(Ile). As IleRS can inadvertently accommodate and process structurally similar amino acids such as valine, to avoid such errors it has two additional distinct tRNA(Ile)-dependent editing activities. One activity is designated as 'pretransfer' editing and involves the hydrolysis of activated Val-AMP. The other activity is designated 'posttransfer' editing and involves deacylation of mischarged Val-tRNA(Ile). The sequence is that of Isoleucine--tRNA ligase from Corynebacterium efficiens (strain DSM 44549 / YS-314 / AJ 12310 / JCM 11189 / NBRC 100395).